Here is a 426-residue protein sequence, read N- to C-terminus: MISHFLNFLKFNGTPGEYGSPLWATVYILVIFGVASVAVMLMTYLERKVLAHMQIRLGPMRVGPHGLLQPIADALKLLIKEDIVPDGADKFLFWMAPVTVMMTAFTTYLVIPFGRSHAVTDMNIGVLFMIGISSLGVLAVVMAGWSSNSKYALMGGLRSAAQMVSYEVAMGLAIVSVLMMTSLQTGTGTLSMIGIVQAQQAQGSWFIFKFFPTGLVAFVIFAIAMVAETNRAPFDLPEAESELTAGFHTEYSGFRWSLFFLGEYVAMIAVSSIAVTLWLGGWLRPFPNALSGATWDFAFSVFPALLFFVLAAGCFIGWVRMPSKPAFKVQAIGLGIFGVLLGMIGAVLLIPAVRVRVSDIFWFSAKVGVFMYLYIWYRGTFPRYRFDQLMKIGWKVLLPVSLGVLIVTAVLGVRHELIAGLMGVAR.

10 consecutive transmembrane segments (helical) span residues 22–42 (LWATVYILVIFGVASVAVMLM), 91–111 (FLFWMAPVTVMMTAFTTYLVI), 124–144 (IGVLFMIGISSLGVLAVVMAG), 163–183 (MVSYEVAMGLAIVSVLMMTSL), 206–226 (FIFKFFPTGLVAFVIFAIAMV), 258–278 (LFFLGEYVAMIAVSSIAVTLW), 299–319 (FSVFPALLFFVLAAGCFIGWV), 331–351 (AIGLGIFGVLLGMIGAVLLIP), 357–377 (VSDIFWFSAKVGVFMYLYIWY), and 392–412 (IGWKVLLPVSLGVLIVTAVLG).

The protein belongs to the complex I subunit 1 family. In terms of assembly, NDH-1 is composed of 14 different subunits. Subunits NuoA, H, J, K, L, M, N constitute the membrane sector of the complex.

The protein resides in the cell inner membrane. The catalysed reaction is a quinone + NADH + 5 H(+)(in) = a quinol + NAD(+) + 4 H(+)(out). NDH-1 shuttles electrons from NADH, via FMN and iron-sulfur (Fe-S) centers, to quinones in the respiratory chain. The immediate electron acceptor for the enzyme in this species is believed to be ubiquinone. Couples the redox reaction to proton translocation (for every two electrons transferred, four hydrogen ions are translocated across the cytoplasmic membrane), and thus conserves the redox energy in a proton gradient. This subunit may bind ubiquinone. This Koribacter versatilis (strain Ellin345) protein is NADH-quinone oxidoreductase subunit H 1.